Reading from the N-terminus, the 328-residue chain is 4-hydroxy-3-methylbut-2-enyl diphosphate reductase (328 aa).

C13 is a [4Fe-4S] cluster binding site. 2 residues coordinate (2E)-4-hydroxy-3-methylbut-2-enyl diphosphate: H41 and H75. Residues H41 and H75 each coordinate dimethylallyl diphosphate. Positions 41 and 75 each coordinate isopentenyl diphosphate. A [4Fe-4S] cluster-binding site is contributed by C97. Position 125 (H125) interacts with (2E)-4-hydroxy-3-methylbut-2-enyl diphosphate. H125 is a binding site for dimethylallyl diphosphate. Position 125 (H125) interacts with isopentenyl diphosphate. The active-site Proton donor is the E127. T168 provides a ligand contact to (2E)-4-hydroxy-3-methylbut-2-enyl diphosphate. C225 contacts [4Fe-4S] cluster. 4 residues coordinate (2E)-4-hydroxy-3-methylbut-2-enyl diphosphate: S253, S254, N255, and S302. Dimethylallyl diphosphate-binding residues include S253, S254, N255, and S302. Isopentenyl diphosphate-binding residues include S253, S254, N255, and S302.

Belongs to the IspH family. Requires [4Fe-4S] cluster as cofactor.

The catalysed reaction is isopentenyl diphosphate + 2 oxidized [2Fe-2S]-[ferredoxin] + H2O = (2E)-4-hydroxy-3-methylbut-2-enyl diphosphate + 2 reduced [2Fe-2S]-[ferredoxin] + 2 H(+). It catalyses the reaction dimethylallyl diphosphate + 2 oxidized [2Fe-2S]-[ferredoxin] + H2O = (2E)-4-hydroxy-3-methylbut-2-enyl diphosphate + 2 reduced [2Fe-2S]-[ferredoxin] + 2 H(+). Its pathway is isoprenoid biosynthesis; dimethylallyl diphosphate biosynthesis; dimethylallyl diphosphate from (2E)-4-hydroxy-3-methylbutenyl diphosphate: step 1/1. It participates in isoprenoid biosynthesis; isopentenyl diphosphate biosynthesis via DXP pathway; isopentenyl diphosphate from 1-deoxy-D-xylulose 5-phosphate: step 6/6. Its function is as follows. Catalyzes the conversion of 1-hydroxy-2-methyl-2-(E)-butenyl 4-diphosphate (HMBPP) into a mixture of isopentenyl diphosphate (IPP) and dimethylallyl diphosphate (DMAPP). Acts in the terminal step of the DOXP/MEP pathway for isoprenoid precursor biosynthesis. The chain is 4-hydroxy-3-methylbut-2-enyl diphosphate reductase from Chlorobium chlorochromatii (strain CaD3).